A 511-amino-acid chain; its full sequence is MTTHNDDAAASLPIDENKIIAERRAKLSALREQGIAFPNDFRPQHKAADLQEKYGSKTREELEAEPVTVVLAGRMMLKREAGKKAAFATLQDASGSKADGRIQIYVTLNLTGEAAMAALHHYDLGDILGVSGTLFKTKTDELTIKVSELRLITKSLRPLPDKFHGLADQETKYRQRYVDLIMNEDTRRTFKARTAAISSIRRFMERNDFMEVETPMLHTIPGGAAAKPFTTHHNALDMEMFLRIAPELYLKRLVVGGFDRVFEINRNFRNEGVSIRHNPEFTMMEFYAAYTDYKWLMDFTEAVIRQAAIDAHGTATLTYGGRELDLAKPFHRLTIVGAINKFAPQYTHEQLHDAEYIKAELKKFGVKPHAHSGLGALQLALFEETAEAQLWEPTYIIDYPVEVSPLARASDTVAGITERFELFMVGREIANGFSELNDAEDQAARFQAQVAAKDAGDEEAMYYDADYIRALEYGMPPTGGCGIGIDRLMMIITDSPNIRDVLLFPHLRRED.

2 residues coordinate Mg(2+): E421 and E428.

The protein belongs to the class-II aminoacyl-tRNA synthetase family. Homodimer. Requires Mg(2+) as cofactor.

The protein resides in the cytoplasm. The enzyme catalyses tRNA(Lys) + L-lysine + ATP = L-lysyl-tRNA(Lys) + AMP + diphosphate. The sequence is that of Lysine--tRNA ligase from Herminiimonas arsenicoxydans.